The primary structure comprises 204 residues: Recombination protein RecR (204 aa).

A C4-type zinc finger spans residues 58 to 75 (CSICQNITDLGTDPCLLC). One can recognise a Toprim domain in the interval 83–181 (SVICVVESPT…NVTRIARGIP (99 aa)).

The protein belongs to the RecR family.

Functionally, may play a role in DNA repair. It seems to be involved in an RecBC-independent recombinational process of DNA repair. It may act with RecF and RecO. The protein is Recombination protein RecR of Chlorobaculum parvum (strain DSM 263 / NCIMB 8327) (Chlorobium vibrioforme subsp. thiosulfatophilum).